We begin with the raw amino-acid sequence, 250 residues long: Acetoacetate decarboxylase 1 (250 aa).

Catalysis depends on Lys120, which acts as the Schiff-base intermediate with acetoacetate.

It belongs to the ADC family.

The catalysed reaction is acetoacetate + H(+) = acetone + CO2. Functionally, catalyzes the conversion of acetoacetate to acetone and carbon dioxide. In Bradyrhizobium diazoefficiens (strain JCM 10833 / BCRC 13528 / IAM 13628 / NBRC 14792 / USDA 110), this protein is Acetoacetate decarboxylase 1.